The primary structure comprises 424 residues: Histidine--tRNA ligase (424 aa).

Belongs to the class-II aminoacyl-tRNA synthetase family. In terms of assembly, homodimer.

It localises to the cytoplasm. It catalyses the reaction tRNA(His) + L-histidine + ATP = L-histidyl-tRNA(His) + AMP + diphosphate + H(+). The chain is Histidine--tRNA ligase from Pectobacterium carotovorum subsp. carotovorum (strain PC1).